Reading from the N-terminus, the 108-residue chain is Cyclin-dependent protein kinase inhibitor SMR13 (108 aa).

In terms of biological role, probable cyclin-dependent protein kinase (CDK) inhibitor that functions as a repressor of mitosis in the endoreduplication cell cycle. This is Cyclin-dependent protein kinase inhibitor SMR13 from Arabidopsis thaliana (Mouse-ear cress).